A 52-amino-acid polypeptide reads, in one-letter code: AASQHLCGSHLVEALFLVCGESGFFYNPNKSGIVEQCCLKPCTIYEMEKYCN.

3 cysteine pairs are disulfide-bonded: Cys-7-Cys-38, Cys-19-Cys-51, and Cys-37-Cys-42.

The protein belongs to the insulin family. In terms of assembly, heterodimer of a B chain and an A chain linked by two disulfide bonds.

Its subcellular location is the secreted. Insulin decreases blood glucose concentration. It increases cell permeability to monosaccharides, amino acids and fatty acids. It accelerates glycolysis, the pentose phosphate cycle, and glycogen synthesis in liver. This chain is Insulin (ins), found in Amia calva (Bowfin).